The primary structure comprises 189 residues: CASP-like protein 1U2 (189 aa).

The Cytoplasmic portion of the chain corresponds to 1 to 24; the sequence is MFGSDDSGCHVMDDDVAPPANGSK. The chain crosses the membrane as a helical span at residues 25–45; sequence AVTLLLRLITLALALTSAVLM. At 46 to 71 the chain is on the extracellular side; it reads ATASECTIYGLDGATATTVTFKDYQP. The helical transmembrane segment at 72–92 threads the bilayer; the sequence is FIYLVGSNIAATILEVAAIYV. The Cytoplasmic portion of the chain corresponds to 93–109; sequence QVGKGDDVEDAPMIPRV. Residues 110–130 form a helical membrane-spanning segment; sequence VLVVVDVAVQMLLYSATGAVF. Over 131–158 the chain is Extracellular; it reads AAVMAYGPQISACTGAAGHFCEQVQRSK. The helical transmembrane segment at 159–179 threads the bilayer; that stretch reads IISLAASLSAVLAAVAKDVAL. Residues 180–189 lie on the Cytoplasmic side of the membrane; sequence PCSVWPHPSS.

It belongs to the Casparian strip membrane proteins (CASP) family. Homodimer and heterodimers.

The protein localises to the cell membrane. This Sorghum bicolor (Sorghum) protein is CASP-like protein 1U2.